The sequence spans 184 residues: Oocyte-secreted protein 4A (184 aa).

The N-terminal stretch at 1–19 is a signal peptide; that stretch reads MKISCVLGKLLMLFELIHG. Asn-128 is a glycosylation site (N-linked (GlcNAc...) asparagine).

It belongs to the PLAC1 family.

Its subcellular location is the secreted. The polypeptide is Oocyte-secreted protein 4A (Homo sapiens (Human)).